Consider the following 314-residue polypeptide: Probable cell division protein WhiA (314 aa).

The H-T-H motif DNA-binding region spans 274 to 305 (SLAELGDRLEISKSGANHRMRKLKALEDMINA).

Belongs to the WhiA family.

Functionally, involved in cell division and chromosome segregation. The sequence is that of Probable cell division protein WhiA from Leuconostoc citreum (strain KM20).